The chain runs to 93 residues: uncharacterized protein (93 aa).

The protein to E.coli YeaC.

This is an uncharacterized protein from Pseudoalteromonas haloplanktis (Alteromonas haloplanktis).